Consider the following 548-residue polypeptide: Probable malate:quinone oxidoreductase (548 aa).

The disordered stretch occupies residues Asp521–Leu548. The segment covering Pro530–Lys541 has biased composition (low complexity).

It belongs to the MQO family. FAD is required as a cofactor.

It carries out the reaction (S)-malate + a quinone = a quinol + oxaloacetate. Its pathway is carbohydrate metabolism; tricarboxylic acid cycle; oxaloacetate from (S)-malate (quinone route): step 1/1. The protein is Probable malate:quinone oxidoreductase of Shigella sonnei (strain Ss046).